A 370-amino-acid polypeptide reads, in one-letter code: tRNA (guanine(9)-/adenine(9)-N1)-methyltransferase (370 aa).

An SAM-dependent MTase TRM10-type domain is found at 87-292 (TPEELREKLP…KELPKRATRY (206 aa)).

This sequence belongs to the class IV-like SAM-binding methyltransferase superfamily. TRM10 family.

The protein resides in the cytoplasm. It catalyses the reaction adenosine(9) in tRNA + S-adenosyl-L-methionine = N(1)-methyladenosine(9) in tRNA + S-adenosyl-L-homocysteine + H(+). The catalysed reaction is guanosine(9) in tRNA + S-adenosyl-L-methionine = N(1)-methylguanosine(9) in tRNA + S-adenosyl-L-homocysteine + H(+). Catalyzes the S-adenosyl-L-methionine-dependent formation of either N(1)-methyladenine or N(1)-methylguanine at position 9 (m1A9 or m1G9) in tRNA. The chain is tRNA (guanine(9)-/adenine(9)-N1)-methyltransferase from Thermococcus kodakarensis (strain ATCC BAA-918 / JCM 12380 / KOD1) (Pyrococcus kodakaraensis (strain KOD1)).